A 484-amino-acid chain; its full sequence is Adenylosuccinate lyase (484 aa).

Ala2 bears the N-acetylalanine mark. Substrate contacts are provided by residues 20–21 (RY), 85–87 (RHD), and 111–112 (TS). Lys147 bears the N6-acetyllysine mark. The Proton donor/acceptor role is filled by His159. Residue Gln241 participates in substrate binding. The active-site Proton donor/acceptor is the Ser289. At Lys295 the chain carries N6-acetyllysine. Substrate contacts are provided by Arg303, Arg329, Ser334, and Arg338. Lys415 is covalently cross-linked (Glycyl lysine isopeptide (Lys-Gly) (interchain with G-Cter in SUMO1)).

Belongs to the lyase 1 family. Adenylosuccinate lyase subfamily. In terms of assembly, homotetramer. Residues from neighboring subunits contribute catalytic and substrate-binding residues to each active site.

It catalyses the reaction N(6)-(1,2-dicarboxyethyl)-AMP = fumarate + AMP. The catalysed reaction is (2S)-2-[5-amino-1-(5-phospho-beta-D-ribosyl)imidazole-4-carboxamido]succinate = 5-amino-1-(5-phospho-beta-D-ribosyl)imidazole-4-carboxamide + fumarate. It participates in purine metabolism; AMP biosynthesis via de novo pathway; AMP from IMP: step 2/2. Its pathway is purine metabolism; IMP biosynthesis via de novo pathway; 5-amino-1-(5-phospho-D-ribosyl)imidazole-4-carboxamide from 5-amino-1-(5-phospho-D-ribosyl)imidazole-4-carboxylate: step 2/2. Catalyzes two non-sequential steps in de novo AMP synthesis: converts (S)-2-(5-amino-1-(5-phospho-D-ribosyl)imidazole-4-carboxamido)succinate (SAICAR) to fumarate plus 5-amino-1-(5-phospho-D-ribosyl)imidazole-4-carboxamide, and thereby also contributes to de novo IMP synthesis, and converts succinyladenosine monophosphate (SAMP) to AMP and fumarate. The chain is Adenylosuccinate lyase (Adsl) from Mus musculus (Mouse).